The following is a 305-amino-acid chain: Auxin-responsive protein IAA27 (305 aa).

Positions 45 to 49 (LRLGL) match the EAR-like (transcriptional repression) motif. 2 disordered regions span residues 96 to 119 (TTATGDVGSGSGPRTSVVKDGKST) and 155 to 180 (KNSMASSQSQKPGNNSETEEAEAKSG). The span at 155–170 (KNSMASSQSQKPGNNS) shows a compositional bias: polar residues. Positions 185–287 (CLYVKVSMEG…SCKKLRIMKS (103 aa)) constitute a PB1 domain.

The protein belongs to the Aux/IAA family. As to quaternary structure, homodimers and heterodimers. Interacts with phytochrome A. Interacts with TPL.

The protein localises to the nucleus. Functionally, aux/IAA proteins are short-lived transcriptional factors that function as repressors of early auxin response genes at low auxin concentrations. Repression is thought to result from the interaction with auxin response factors (ARFs), proteins that bind to the auxin-responsive promoter element (AuxRE). Formation of heterodimers with ARF proteins may alter their ability to modulate early auxin response genes expression. The protein is Auxin-responsive protein IAA27 (IAA27) of Arabidopsis thaliana (Mouse-ear cress).